The following is a 1052-amino-acid chain: Membrane-bound transcription factor site-1 protease (1052 aa).

The signal sequence occupies residues 1–17 (MKLINIWLLLLVVLLCG). The propeptide occupies 18–186 (KKHLGDRLGK…TGRHSSRRLL (169 aa)). An N-linked (GlcNAc...) asparagine glycan is attached at Asn148. Ser168 carries the phosphoserine modification. Residues 187–999 (RAIPRQVAQT…MPGRYNQEVG (813 aa)) lie on the Lumenal side of the membrane. Positions 190–472 (PRQVAQTLQA…HGKLDLLRAY (283 aa)) constitute a Peptidase S8 domain. Asp218 serves as the catalytic Charge relay system. N-linked (GlcNAc...) asparagine glycosylation is present at Asn236. Catalysis depends on His249, which acts as the Charge relay system. An N-linked (GlcNAc...) asparagine glycan is attached at Asn305. The active-site Charge relay system is Ser414. 2 N-linked (GlcNAc...) asparagine glycosylation sites follow: Asn515 and Asn728. The span at 877-887 (PSLSHSGNRQR) shows a compositional bias: polar residues. The interval 877-900 (PSLSHSGNRQRPPSGAGLAPPERM) is disordered. Asn939 is a glycosylation site (N-linked (GlcNAc...) asparagine). A helical transmembrane segment spans residues 1000–1022 (QTIPVFAFLGAMVALAFFVVQIS). The Cytoplasmic segment spans residues 1023–1052 (KAKSRPKRRRPRAKRPQLTQQTHPPRTPSV). The span at 1025–1037 (KSRPKRRRPRAKR) shows a compositional bias: basic residues. Residues 1025-1052 (KSRPKRRRPRAKRPQLTQQTHPPRTPSV) form a disordered region.

The protein belongs to the peptidase S8 family. Ca(2+) serves as cofactor. The 148 kDa zymogen is processed progressively into two membrane-bound 120 and 106 kDa forms in the endoplasmic reticulum, and late into a secreted 98 kDa form. The propeptide is autocatalytically removed through an intramolecular cleavage after Leu-186. Further cleavage generates 14, 10, and 8 kDa intermediates.

The protein resides in the endoplasmic reticulum membrane. It localises to the golgi apparatus membrane. The enzyme catalyses Processes precursors containing basic and hydrophobic/aliphatic residues at P4 and P2, respectively, with a relatively relaxed acceptance of amino acids at P1 and P3.. With respect to regulation, inhibited by divalent copper and zinc ions, but not by nickel or cobalt. Inhibited by its prosegment, but not smaller fragments. Inhibited by 4-(2-aminoethyl)benzenesulfonyl fluoride (AEBSF), a serine protease inhibitor. In terms of biological role, serine protease that cleaves after hydrophobic or small residues, provided that Arg or Lys is in position P4: known substrates include SREBF1/SREBP1, SREBF2/SREBP2, BDNF, GNPTAB, ATF6, ATF6B and FAM20C. Cleaves substrates after Arg-Ser-Val-Leu (SREBP2), Arg-His-Leu-Leu (ATF6), Arg-Gly-Leu-Thr (BDNF) and its own propeptide after Arg-Arg-Leu-Leu. Catalyzes the first step in the proteolytic activation of the sterol regulatory element-binding proteins (SREBPs) SREBF1/SREBP1 and SREBF2/SREBP2. Also mediates the first step in the proteolytic activation of the cyclic AMP-dependent transcription factor ATF-6 (ATF6 and ATF6B). Mediates the protein cleavage of GNPTAB into subunit alpha and beta, thereby participating in biogenesis of lysosomes. Cleaves the propeptide from FAM20C which is required for FAM20C secretion from the Golgi apparatus membrane and for enhancement of FAM20C kinase activity, promoting osteoblast differentiation and biomineralization. Involved in the regulation of M6P-dependent Golgi-to-lysosome trafficking of lysosomal enzymes. It is required for the activation of CREB3L2/BBF2H7, a transcriptional activator of MIA3/TANGO and other genes controlling mega vesicle formation. Therefore, it plays a key role in the regulation of mega vesicle-mediated collagen trafficking. In astrocytes and osteoblasts, upon DNA damage and ER stress, mediates the first step of the regulated intramembrane proteolytic activation of the transcription factor CREB3L1, leading to the inhibition of cell-cycle progression. The protein is Membrane-bound transcription factor site-1 protease of Cricetulus griseus (Chinese hamster).